Here is a 548-residue protein sequence, read N- to C-terminus: CTP synthase (548 aa).

Residues 1-265 are amidoligase domain; that stretch reads MTRYIFVTGG…DDIICDKLRI (265 aa). Residue Ser13 participates in CTP binding. Ser13 provides a ligand contact to UTP. ATP-binding positions include 14–19 and Asp71; that span reads SLGKGI. 2 residues coordinate Mg(2+): Asp71 and Glu139. CTP contacts are provided by residues 146-148, 186-191, and Lys222; these read DIE and KTKPTQ. Residues 186–191 and Lys222 each bind UTP; that span reads KTKPTQ. In terms of domain architecture, Glutamine amidotransferase type-1 spans 290–541; sequence NIAMVGKYME…VNAALAYKAA (252 aa). Position 351 (Gly351) interacts with L-glutamine. The Nucleophile; for glutamine hydrolysis role is filled by Cys378. Residues 379–382, Glu402, and Arg469 each bind L-glutamine; that span reads LGMQ. Active-site residues include His514 and Glu516.

This sequence belongs to the CTP synthase family. In terms of assembly, homotetramer.

The catalysed reaction is UTP + L-glutamine + ATP + H2O = CTP + L-glutamate + ADP + phosphate + 2 H(+). The enzyme catalyses L-glutamine + H2O = L-glutamate + NH4(+). It catalyses the reaction UTP + NH4(+) + ATP = CTP + ADP + phosphate + 2 H(+). Its pathway is pyrimidine metabolism; CTP biosynthesis via de novo pathway; CTP from UDP: step 2/2. Its activity is regulated as follows. Allosterically activated by GTP, when glutamine is the substrate; GTP has no effect on the reaction when ammonia is the substrate. The allosteric effector GTP functions by stabilizing the protein conformation that binds the tetrahedral intermediate(s) formed during glutamine hydrolysis. Inhibited by the product CTP, via allosteric rather than competitive inhibition. Its function is as follows. Catalyzes the ATP-dependent amination of UTP to CTP with either L-glutamine or ammonia as the source of nitrogen. Regulates intracellular CTP levels through interactions with the four ribonucleotide triphosphates. The sequence is that of CTP synthase from Chromohalobacter salexigens (strain ATCC BAA-138 / DSM 3043 / CIP 106854 / NCIMB 13768 / 1H11).